The primary structure comprises 347 residues: Selenide, water dikinase (347 aa).

The active site involves Cys-17. ATP contacts are provided by residues Lys-20 and Thr-48–Asp-50. Position 51 (Asp-51) interacts with Mg(2+). Residues Asp-68, Asp-91, and Gly-139–Ser-141 each bind ATP. Position 91 (Asp-91) interacts with Mg(2+). Mg(2+) is bound at residue Asp-227.

Belongs to the selenophosphate synthase 1 family. Class I subfamily. In terms of assembly, homodimer. It depends on Mg(2+) as a cofactor.

It catalyses the reaction hydrogenselenide + ATP + H2O = selenophosphate + AMP + phosphate + 2 H(+). Its function is as follows. Synthesizes selenophosphate from selenide and ATP. The chain is Selenide, water dikinase from Shigella flexneri serotype 5b (strain 8401).